We begin with the raw amino-acid sequence, 210 residues long: Glutathione S-transferase P 10 (210 aa).

Residues 2-81 (AVPQLYYFTI…HLGRVHGLNG (80 aa)) form the GST N-terminal domain. Residues Tyr8, Trp41, Lys45, 52–53 (QL), and 65–66 (QT) each bind glutathione. The region spanning 83-200 (NEQEATFLDM…YLEKRKADKV (118 aa)) is the GST C-terminal domain.

This sequence belongs to the GST superfamily. Pi family. Homodimer. In terms of tissue distribution, expressed in cells at the mouth and adjacent to the pharyngeal bulbs of the head and also in the tail.

The enzyme catalyses RX + glutathione = an S-substituted glutathione + a halide anion + H(+). Conjugation of reduced glutathione to a wide number of exogenous and endogenous hydrophobic electrophiles. Responsible for approximately one-third of 4-hydroxy-2-nonenal conjugation. May play a role in the detoxification of reactive oxygen species produced during pathogenic bacterial infection. This Caenorhabditis elegans protein is Glutathione S-transferase P 10.